The sequence spans 245 residues: tRNA1(Val) (adenine(37)-N6)-methyltransferase (245 aa).

It belongs to the methyltransferase superfamily. tRNA (adenine-N(6)-)-methyltransferase family.

The protein localises to the cytoplasm. The catalysed reaction is adenosine(37) in tRNA1(Val) + S-adenosyl-L-methionine = N(6)-methyladenosine(37) in tRNA1(Val) + S-adenosyl-L-homocysteine + H(+). In terms of biological role, specifically methylates the adenine in position 37 of tRNA(1)(Val) (anticodon cmo5UAC). This chain is tRNA1(Val) (adenine(37)-N6)-methyltransferase, found in Salmonella enteritidis PT4 (strain P125109).